A 214-amino-acid chain; its full sequence is Probable transaldolase (214 aa).

The active-site Schiff-base intermediate with substrate is the Lys83.

It belongs to the transaldolase family. Type 3B subfamily.

It localises to the cytoplasm. It catalyses the reaction D-sedoheptulose 7-phosphate + D-glyceraldehyde 3-phosphate = D-erythrose 4-phosphate + beta-D-fructose 6-phosphate. It functions in the pathway carbohydrate degradation; pentose phosphate pathway; D-glyceraldehyde 3-phosphate and beta-D-fructose 6-phosphate from D-ribose 5-phosphate and D-xylulose 5-phosphate (non-oxidative stage): step 2/3. Transaldolase is important for the balance of metabolites in the pentose-phosphate pathway. In Dictyoglomus turgidum (strain DSM 6724 / Z-1310), this protein is Probable transaldolase.